The sequence spans 364 residues: Chorismate synthase (364 aa).

Residues arginine 48 and arginine 54 each coordinate NADP(+). FMN-binding positions include 125–127, glycine 282, 297–301, and arginine 323; these read RSS and KPPAS.

It belongs to the chorismate synthase family. Homotetramer. Requires FMNH2 as cofactor.

The catalysed reaction is 5-O-(1-carboxyvinyl)-3-phosphoshikimate = chorismate + phosphate. Its pathway is metabolic intermediate biosynthesis; chorismate biosynthesis; chorismate from D-erythrose 4-phosphate and phosphoenolpyruvate: step 7/7. Its function is as follows. Catalyzes the anti-1,4-elimination of the C-3 phosphate and the C-6 proR hydrogen from 5-enolpyruvylshikimate-3-phosphate (EPSP) to yield chorismate, which is the branch point compound that serves as the starting substrate for the three terminal pathways of aromatic amino acid biosynthesis. This reaction introduces a second double bond into the aromatic ring system. This Chloroflexus aurantiacus (strain ATCC 29366 / DSM 635 / J-10-fl) protein is Chorismate synthase.